Consider the following 1330-residue polypeptide: G2/mitotic-specific cyclin-B3 (1330 aa).

The disordered stretch occupies residues 1-50; sequence MPLPLPSRSSKPETKKSRSSKIVPSGNNGQSEKRGENYQEKISSSSPRRL. A compositionally biased stretch (polar residues) spans 20–30; the sequence is SKIVPSGNNGQ. The D-box motif lies at 54 to 62; sequence RSAFEDLTN. The disordered stretch occupies residues 1002-1059; sequence VETSSRVPSTPPESRAGMSSVGKLSTTSKSSVCESSSNKPSSSWGESSQKEMTPLEDI. Residues 1026 to 1048 show a composition bias toward low complexity; sequence STTSKSSVCESSSNKPSSSWGES.

It belongs to the cyclin family. Cyclin AB subfamily. As to quaternary structure, interacts with CDK2 kinase. Ubiquitinated. Ubiquitination leads to its degradation during anaphase entry, after degradation of CCNB1.

The protein resides in the nucleus. Its function is as follows. Cyclins are positive regulatory subunits of the cyclin-dependent kinases (CDKs), and thereby play an essential role in the control of the cell cycle, notably via their destruction during cell division. Its tissue specificity suggest that it may be required during early meiotic prophase I. The protein is G2/mitotic-specific cyclin-B3 (CCNB3) of Canis lupus familiaris (Dog).